Here is a 457-residue protein sequence, read N- to C-terminus: Acetate--CoA ligase [ADP-forming] II subunit alpha (457 aa).

It belongs to the acetate CoA ligase alpha subunit family. Heterotetramer of two alpha and two beta subunits.

The catalysed reaction is acetate + ATP + CoA = acetyl-CoA + ADP + phosphate. Catalyzes the reversible formation of acetate and ATP from acetyl-CoA by using ADP and phosphate. Can use other substrates such as phenylacetyl-CoA, indoleacetyl-CoA and isobutyryl-CoA, but not succinyl-CoA. Seems to be involved primarily in the degradation of aryl-CoA esters to the corresponding acids. Participates in the conversion of acetyl-CoA to acetate and in the degradation of branched-chain amino acids via branched-chain-acyl-CoA esters. This Pyrococcus furiosus (strain ATCC 43587 / DSM 3638 / JCM 8422 / Vc1) protein is Acetate--CoA ligase [ADP-forming] II subunit alpha.